A 367-amino-acid polypeptide reads, in one-letter code: Protein NDRG4-B (367 aa).

The segment covering 1 to 12 has biased composition (basic and acidic residues); sequence MSELRFPEEKPL. Disordered regions lie at residues 1–21 and 333–367; these read MSEL…TEME and LTSA…EVSC. The segment covering 347 to 367 has biased composition (polar residues); the sequence is CTQSESSDGIGQINHTMEVSC.

It belongs to the NDRG family.

Its subcellular location is the cytoplasm. It is found in the cytosol. Its function is as follows. Contributes to the maintenance of intracerebral BDNF levels within the normal range. May enhance growth factor-induced ERK1 and ERK2 phosphorylation. May attenuate growth factor-promoted ELK1 phosphorylation in a microtubule-dependent manner. The polypeptide is Protein NDRG4-B (ndrg4-b) (Xenopus laevis (African clawed frog)).